The primary structure comprises 437 residues: Protein farnesyltransferase subunit beta (437 aa).

PFTB repeat units follow at residues 123–164 (ATDV…CIIG), 174–215 (REKL…SLTN), 222–263 (FEGT…VILK), 270–312 (LKSL…PLLH), and 332–374 (QQAL…SIAQ). (2E,6E)-farnesyl diphosphate contacts are provided by residues 248 to 251 (HGGY) and 291 to 294 (RCNK). Zn(2+) contacts are provided by Asp-297 and Cys-299. 300 to 303 (YSFW) is a (2E,6E)-farnesyl diphosphate binding site. His-362 provides a ligand contact to Zn(2+). Phosphoserine is present on Ser-432. Thr-436 carries the post-translational modification Phosphothreonine.

It belongs to the protein prenyltransferase subunit beta family. In terms of assembly, heterodimer of FNTA and FNTB. It depends on Zn(2+) as a cofactor.

The enzyme catalyses L-cysteinyl-[protein] + (2E,6E)-farnesyl diphosphate = S-(2E,6E)-farnesyl-L-cysteinyl-[protein] + diphosphate. Its function is as follows. Essential subunit of the farnesyltransferase complex. Catalyzes the transfer of a farnesyl moiety from farnesyl diphosphate to a cysteine at the fourth position from the C-terminus of several proteins having the C-terminal sequence Cys-aliphatic-aliphatic-X. The protein is Protein farnesyltransferase subunit beta (Fntb) of Rattus norvegicus (Rat).